The following is a 652-amino-acid chain: Putative ankyrin repeat protein R734 (652 aa).

ANK repeat units lie at residues 77-105 (TNDI…ANNS), 106-136 (EGIK…LPTE), 138-167 (TLRD…HLGY), 192-219 (NDLK…SGYE), 220-242 (FDNR…FFMD), 243-274 (IGFD…QFTQ), 307-337 (INDN…NINR), 396-430 (SDNN…DPNY), 468-498 (PKLT…TIYS), and 535-564 (TNKS…DNNL).

The polypeptide is Putative ankyrin repeat protein R734 (Acanthamoeba polyphaga mimivirus (APMV)).